The chain runs to 111 residues: Ribonuclease P protein component (111 aa).

It belongs to the RnpA family. Consists of a catalytic RNA component (M1 or rnpB) and a protein subunit.

It carries out the reaction Endonucleolytic cleavage of RNA, removing 5'-extranucleotides from tRNA precursor.. RNaseP catalyzes the removal of the 5'-leader sequence from pre-tRNA to produce the mature 5'-terminus. It can also cleave other RNA substrates such as 4.5S RNA. The protein component plays an auxiliary but essential role in vivo by binding to the 5'-leader sequence and broadening the substrate specificity of the ribozyme. The polypeptide is Ribonuclease P protein component (Fusobacterium nucleatum subsp. nucleatum (strain ATCC 25586 / DSM 15643 / BCRC 10681 / CIP 101130 / JCM 8532 / KCTC 2640 / LMG 13131 / VPI 4355)).